The chain runs to 192 residues: Ion-translocating oxidoreductase complex subunit B (192 aa).

The interval 1–26 (MNAIWIAVAAVSLLGLAFGAILGYAS) is hydrophobic. Positions 32 to 91 (EDDPVVEKIDEILPQSQCGQCGYPGCRPYAEAISCNGEKINRCAPGGEAVMLKIAELLNV) constitute a 4Fe-4S domain. [4Fe-4S] cluster contacts are provided by Cys-49, Cys-52, Cys-57, Cys-74, Cys-117, Cys-120, Cys-123, Cys-127, Cys-147, Cys-150, Cys-153, and Cys-157. 4Fe-4S ferredoxin-type domains lie at 108 to 137 (MVAV…GATR) and 138 to 167 (AMHT…LQPV).

The protein belongs to the 4Fe4S bacterial-type ferredoxin family. RnfB subfamily. As to quaternary structure, the complex is composed of six subunits: RsxA, RsxB, RsxC, RsxD, RsxE and RsxG. Requires [4Fe-4S] cluster as cofactor.

The protein localises to the cell inner membrane. Its function is as follows. Part of a membrane-bound complex that couples electron transfer with translocation of ions across the membrane. Required to maintain the reduced state of SoxR. The chain is Ion-translocating oxidoreductase complex subunit B from Escherichia coli O127:H6 (strain E2348/69 / EPEC).